We begin with the raw amino-acid sequence, 855 residues long: Mitofusin FZO1 (855 aa).

Basic and acidic residues predominate over residues 1-19 (MSEGKQQFKDSNKPHKDST). The tract at residues 1 to 27 (MSEGKQQFKDSNKPHKDSTDQDDDAAT) is disordered. Residues 1-705 (MSEGKQQFKD…PSLLFTSKIP (705 aa)) are Cytoplasmic-facing. Residues 91 to 190 (NYNNNRVLLK…KRVDDVSSKV (100 aa)) form an HRN region. In terms of domain architecture, Dynamin-type G spans 184–467 (DDVSSKVFIT…KKRSLSKLLP (284 aa)). GTP contacts are provided by residues 197–202 (NTGKSA) and 370–373 (KKFD). Residue K398 forms a Glycyl lysine isopeptide (Lys-Gly) (interchain with G-Cter in ubiquitin) linkage. Residue S408 participates in GTP binding. A compositionally biased stretch (basic and acidic residues) spans 413–433 (ELPHYHNENDNEDHGDRKPDD). The tract at residues 413 to 447 (ELPHYHNENDNEDHGDRKPDDDPYSSSDPDPDFDS) is disordered. K464 is covalently cross-linked (Glycyl lysine isopeptide (Lys-Gly) (interchain with G-Cter in ubiquitin)). The segment at 484-547 (KSNMKMYSEE…KEALLNALDV (64 aa)) is HR1. The segment at 630–843 (GKRLKVSLSI…QSLYEGTVAQ (214 aa)) is required for interaction with UGO1. A helical transmembrane segment spans residues 706 to 726 (TLTLYFLGSTKVVGNIILNGI). Residues 727-736 (KLSSWSSLKK) lie on the Mitochondrial intermembrane side of the membrane. The helical transmembrane segment at 737–757 (LSVPVIVVGSLLGLTYLIHDL) threads the bilayer. Topologically, residues 758–855 (PRALPMNLSI…MVEEINLDID (98 aa)) are cytoplasmic. The HR2 stretch occupies residues 769 to 831 (YKRKLQELDY…KKESNLLSIK (63 aa)). Positions 798 to 825 (TREILRSCEIIMDKKQITKKELENKKES) form a coiled coil.

This sequence belongs to the TRAFAC class dynamin-like GTPase superfamily. Dynamin/Fzo/YdjA family. Mitofusin subfamily. As to quaternary structure, homodimer. Dimerization depends on GTP binding. Component of a large multiprotein complex of 800 kDa. Binds the cytoplasmic domain of UGO1 which binds MGM1 through its intermembrane space domain. Interacts with MDM30. Interacts with UBP2 and UBP12. Interacts (when ubiquitinated) with DOA1; the interaction recruits FZO1 to CDC48 and promotes FZO1 proteasomal degradation. Post-translationally, ubiquitinated at Lys-398 and Lys-464. MDM30 and UGO1 are involved in ubiquitination. Deubiquitinated by UBP2 and UBP12. UBP2 and UBP12 recognize distinct ubiquitin chains on FZO1 that have opposing effects on mitochondrial fusion. UBP2 removes ubiquitin chains that initiate proteolysis of FZO1 and inhibit fusion. UBP12 recognizes ubiquitin chains that stabilize FZO1 and promote mitochondrial fusion. UBP12 deubiquitylates FZO1 only after oligomerization.

The protein localises to the mitochondrion outer membrane. It carries out the reaction GTP + H2O = GDP + phosphate + H(+). In terms of biological role, essential transmembrane GTPase, which mediates mitochondrial fusion. Fusion proceeds through several steps; first mitochondria are tethered together, then brought into close contact, followed by the formation of a docking ring around contact areas, and finally membrane fusion. Fusion of mitochondria occurs in many cell types and constitutes an important step in mitochondrial morphology, which is balanced between fusion and fission, mediated by FZO1 and DNM1, respectively. Functions antagonistically with DNM1. Probably acts by forming membrane contact sites that mediate mitochondrial membrane fusion. Mitochondrial docking and fusion requires GTP hydrolysis. Mitochondrial fusion also promotes increased lifespan. This is Mitofusin FZO1 (FZO1) from Saccharomyces cerevisiae (strain ATCC 204508 / S288c) (Baker's yeast).